Consider the following 113-residue polypeptide: MGNSFRSDRVAVEIQREINDILRNKVRDPRVQDVNITDVQLTGDLSQATVYYSLLSNLASDNEKAATALKKATGLFKSELAKRMTIFKIPDLTFAKDESVEYGSKIDEILTWA.

This sequence belongs to the RbfA family. Monomer. Binds 30S ribosomal subunits, but not 50S ribosomal subunits or 70S ribosomes.

It localises to the cytoplasm. Its function is as follows. One of several proteins that assist in the late maturation steps of the functional core of the 30S ribosomal subunit. Associates with free 30S ribosomal subunits (but not with 30S subunits that are part of 70S ribosomes or polysomes). Required for efficient processing of 16S rRNA. May interact with the 5'-terminal helix region of 16S rRNA. This is Ribosome-binding factor A from Lactococcus lactis subsp. cremoris (Streptococcus cremoris).